Here is a 318-residue protein sequence, read N- to C-terminus: Replication factor C small subunit (318 aa).

43–50 is a binding site for ATP; it reads GSVGTGKT.

Belongs to the activator 1 small subunits family. RfcS subfamily. Heteromultimer composed of small subunits (RfcS) and large subunits (RfcL).

In terms of biological role, part of the RFC clamp loader complex which loads the PCNA sliding clamp onto DNA. The sequence is that of Replication factor C small subunit from Thermoplasma volcanium (strain ATCC 51530 / DSM 4299 / JCM 9571 / NBRC 15438 / GSS1).